A 261-amino-acid chain; its full sequence is Cytochrome c oxidase subunit 3 (261 aa).

The Mitochondrial matrix portion of the chain corresponds to 1–15 (MAHQAHAYHMVDPSP). A helical membrane pass occupies residues 16 to 34 (WPLTGAIAALLMTSGLAIW). Topologically, residues 35–40 (FHFHST) are mitochondrial intermembrane. A helical membrane pass occupies residues 41 to 66 (TLMTLGLILLLLTMYQWWRDIIREGT). The Mitochondrial matrix segment spans residues 67–72 (FQGHHT). The chain crosses the membrane as a helical span at residues 73 to 105 (PPVQKGLRYGMILFITSEVFFFLGFFWAFYHSS). Over 106 to 128 (LAPTPELGGCWPPTGITPLDPFE) the chain is Mitochondrial intermembrane. The helical transmembrane segment at 129–152 (VPLLNTAVLLASGVTVTWAHHSIM) threads the bilayer. Topologically, residues 153-155 (EGE) are mitochondrial matrix. A helical membrane pass occupies residues 156–183 (RKQAIQSLALTILLGFYFTALQAMEYYE). The Mitochondrial intermembrane portion of the chain corresponds to 184 to 190 (APFTIAD). A helical transmembrane segment spans residues 191–223 (GVYGSTFFVATGFHGLHVIIGSTFLAVCLLRQI). Over 224 to 232 (QYHFTSEHH) the chain is Mitochondrial matrix. Residues 233–256 (FGFEAAAWYWHFVDVVWLFLYVSI) form a helical membrane-spanning segment. The Mitochondrial intermembrane portion of the chain corresponds to 257–261 (YWWGS).

The protein belongs to the cytochrome c oxidase subunit 3 family. In terms of assembly, component of the cytochrome c oxidase (complex IV, CIV), a multisubunit enzyme composed of 14 subunits. The complex is composed of a catalytic core of 3 subunits MT-CO1, MT-CO2 and MT-CO3, encoded in the mitochondrial DNA, and 11 supernumerary subunits COX4I, COX5A, COX5B, COX6A, COX6B, COX6C, COX7A, COX7B, COX7C, COX8 and NDUFA4, which are encoded in the nuclear genome. The complex exists as a monomer or a dimer and forms supercomplexes (SCs) in the inner mitochondrial membrane with NADH-ubiquinone oxidoreductase (complex I, CI) and ubiquinol-cytochrome c oxidoreductase (cytochrome b-c1 complex, complex III, CIII), resulting in different assemblies (supercomplex SCI(1)III(2)IV(1) and megacomplex MCI(2)III(2)IV(2)).

It is found in the mitochondrion inner membrane. The enzyme catalyses 4 Fe(II)-[cytochrome c] + O2 + 8 H(+)(in) = 4 Fe(III)-[cytochrome c] + 2 H2O + 4 H(+)(out). Component of the cytochrome c oxidase, the last enzyme in the mitochondrial electron transport chain which drives oxidative phosphorylation. The respiratory chain contains 3 multisubunit complexes succinate dehydrogenase (complex II, CII), ubiquinol-cytochrome c oxidoreductase (cytochrome b-c1 complex, complex III, CIII) and cytochrome c oxidase (complex IV, CIV), that cooperate to transfer electrons derived from NADH and succinate to molecular oxygen, creating an electrochemical gradient over the inner membrane that drives transmembrane transport and the ATP synthase. Cytochrome c oxidase is the component of the respiratory chain that catalyzes the reduction of oxygen to water. Electrons originating from reduced cytochrome c in the intermembrane space (IMS) are transferred via the dinuclear copper A center (CU(A)) of subunit 2 and heme A of subunit 1 to the active site in subunit 1, a binuclear center (BNC) formed by heme A3 and copper B (CU(B)). The BNC reduces molecular oxygen to 2 water molecules using 4 electrons from cytochrome c in the IMS and 4 protons from the mitochondrial matrix. In Carassius auratus (Goldfish), this protein is Cytochrome c oxidase subunit 3 (mt-co3).